The sequence spans 195 residues: Thymidylate kinase (195 aa).

Gly-7–Thr-14 provides a ligand contact to ATP.

It belongs to the thymidylate kinase family.

The catalysed reaction is dTMP + ATP = dTDP + ADP. Functionally, phosphorylation of dTMP to form dTDP in both de novo and salvage pathways of dTTP synthesis. This Aquifex aeolicus (strain VF5) protein is Thymidylate kinase (tmk).